Consider the following 562-residue polypeptide: Urease subunit alpha (562 aa).

The 432-residue stretch at 131–562 (GGMDCHIHFI…LPMAQRYFLF (432 aa)) folds into the Urease domain. 3 residues coordinate Ni(2+): H136, H138, and K219. K219 is subject to N6-carboxylysine. Residue H221 participates in substrate binding. Residues H248 and H274 each coordinate Ni(2+). The active-site Proton donor is the H322. D362 lines the Ni(2+) pocket.

This sequence belongs to the metallo-dependent hydrolases superfamily. Urease alpha subunit family. As to quaternary structure, heterotrimer of UreA (gamma), UreB (beta) and UreC (alpha) subunits. Three heterotrimers associate to form the active enzyme. It depends on Ni cation as a cofactor. Carboxylation allows a single lysine to coordinate two nickel ions.

Its subcellular location is the cytoplasm. The catalysed reaction is urea + 2 H2O + H(+) = hydrogencarbonate + 2 NH4(+). It participates in nitrogen metabolism; urea degradation; CO(2) and NH(3) from urea (urease route): step 1/1. The protein is Urease subunit alpha of Paracoccus denitrificans (strain Pd 1222).